A 279-amino-acid polypeptide reads, in one-letter code: Probable cyclic nucleotide phosphodiesterase Psyc_2036 (279 aa).

Positions 23, 25, 70, 100, 179, 218, and 220 each coordinate Fe cation. Residues His25, Asp70, and 100–101 contribute to the AMP site; that span reads NH. His220 contributes to the AMP binding site.

Belongs to the cyclic nucleotide phosphodiesterase class-III family. Requires Fe(2+) as cofactor.

In Psychrobacter arcticus (strain DSM 17307 / VKM B-2377 / 273-4), this protein is Probable cyclic nucleotide phosphodiesterase Psyc_2036.